A 245-amino-acid chain; its full sequence is Enolase-phosphatase E1 (245 aa).

Mg(2+) contacts are provided by Asp14 and Glu16. Substrate contacts are provided by residues 141–142 (SS) and Lys175. Residue Asp200 coordinates Mg(2+).

Belongs to the HAD-like hydrolase superfamily. MasA/MtnC family. Monomer. Mg(2+) serves as cofactor.

It is found in the cytoplasm. The protein resides in the nucleus. The enzyme catalyses 5-methylsulfanyl-2,3-dioxopentyl phosphate + H2O = 1,2-dihydroxy-5-(methylsulfanyl)pent-1-en-3-one + phosphate. It participates in amino-acid biosynthesis; L-methionine biosynthesis via salvage pathway; L-methionine from S-methyl-5-thio-alpha-D-ribose 1-phosphate: step 3/6. The protein operates within amino-acid biosynthesis; L-methionine biosynthesis via salvage pathway; L-methionine from S-methyl-5-thio-alpha-D-ribose 1-phosphate: step 4/6. Functionally, bifunctional enzyme that catalyzes the enolization of 2,3-diketo-5-methylthiopentyl-1-phosphate (DK-MTP-1-P) into the intermediate 2-hydroxy-3-keto-5-methylthiopentenyl-1-phosphate (HK-MTPenyl-1-P), which is then dephosphorylated to form the acireductone 1,2-dihydroxy-3-keto-5-methylthiopentene (DHK-MTPene). The protein is Enolase-phosphatase E1 of Drosophila grimshawi (Hawaiian fruit fly).